Here is a 526-residue protein sequence, read N- to C-terminus: Probable rhamnogalacturonase B (526 aa).

Residues 1-20 (MHVNTLSVLSLVGLVPLAAA) form the signal peptide. A disulfide bridge connects residues Cys41 and Cys67. Asn144 carries an N-linked (GlcNAc...) asparagine glycan. Asp218 serves as the catalytic Proton donor. Cys220 and Cys237 form a disulfide bridge. Residues Asn238 and Asn253 are each glycosylated (N-linked (GlcNAc...) asparagine). The active site involves His293. Asn320 is a glycosylation site (N-linked (GlcNAc...) asparagine). 2 disulfide bridges follow: Cys343–Cys349 and Cys371–Cys380.

Belongs to the glycosyl hydrolase 28 family.

Its subcellular location is the secreted. The enzyme catalyses Endohydrolysis of alpha-D-GalA-(1-&gt;2)-alpha-L-Rha glycosidic bond in the rhamnogalacturonan I backbone with initial inversion of anomeric configuration releasing oligosaccharides with beta-D-GalA at the reducing end.. In terms of biological role, pectinolytic enzymes consist of four classes of enzymes: pectine lyase, polygalacturonase, pectin methylesterase and rhamnogalacturonase. Hydrolyzes alpha-D-galacturonopyranosyl-(1,2)-alpha-L-rhamnopyranosyl linkages in the backbone of the hairy regions of pectins. The protein is Probable rhamnogalacturonase B (rhgB) of Aspergillus terreus (strain NIH 2624 / FGSC A1156).